Reading from the N-terminus, the 267-residue chain is Type III pantothenate kinase (267 aa).

Residue 6-13 (DVRNTHTT) coordinates ATP. 109–112 (GADR) is a binding site for substrate. Asp111 functions as the Proton acceptor in the catalytic mechanism. Asp131 provides a ligand contact to K(+). Ser134 contacts ATP. Substrate is bound at residue Thr186.

Belongs to the type III pantothenate kinase family. In terms of assembly, homodimer. NH4(+) serves as cofactor. It depends on K(+) as a cofactor.

The protein resides in the cytoplasm. The catalysed reaction is (R)-pantothenate + ATP = (R)-4'-phosphopantothenate + ADP + H(+). Its pathway is cofactor biosynthesis; coenzyme A biosynthesis; CoA from (R)-pantothenate: step 1/5. Catalyzes the phosphorylation of pantothenate (Pan), the first step in CoA biosynthesis. The protein is Type III pantothenate kinase of Mycobacterium sp. (strain JLS).